Consider the following 610-residue polypeptide: DNA replication regulator sld2 (610 aa).

The segment covering 28–42 (WAQKNDGKKPSREAI) has biased composition (basic and acidic residues). Disordered regions lie at residues 28–115 (WAQK…AVHE), 127–261 (SPAV…ERSV), and 338–610 (EQGG…RRRR). Composition is skewed to polar residues over residues 86 to 110 (ETSLPSASTPSKRNRSAATPKSQHY) and 232 to 261 (TKTSTPLNKNTGNSPSKNNLTKTPSGERSV). 2 stretches are compositionally biased toward acidic residues: residues 373 to 386 (VPEEENSFEEDEAA) and 414 to 428 (FDDENFYDSQDEEDL). Basic residues predominate over residues 442–464 (VFKKKGQKRTTRKVNMRPTRTKR). Residues 470–480 (AEEEDDGEEEH) show a composition bias toward acidic residues. Basic and acidic residues predominate over residues 493–503 (KNLDGDDHHTL). The segment covering 514–527 (EFDDGSEGEDEEAE) has biased composition (acidic residues). The span at 544 to 573 (SAKEKTKKDATTETKKKKGTKEGGDEEPAK) shows a compositional bias: basic and acidic residues.

The protein belongs to the SLD2 family.

The protein resides in the cytoplasm. It is found in the nucleus. Its function is as follows. Has a role in the initiation of DNA replication. Required at S-phase checkpoint. The chain is DNA replication regulator sld2 (drc-4) from Neurospora crassa (strain ATCC 24698 / 74-OR23-1A / CBS 708.71 / DSM 1257 / FGSC 987).